The primary structure comprises 680 residues: MTQFTDIDKLAVSTIRILAVDTVSKANSGHPGAPLGMAPAAHVLWSQMRMNPTNPDWINRDRFVLSNGHAVALLYSMLHLTGYDLSIEDLKQFRQLGSRTPGHPEFELPGVEVTTGPLGQGISNAVGMAMAQANLAATYNKPGFTLSDNYTYVFLGDGCLQEGISSEASSLAGHLKLGNLIAIYDDNKITIDGATSISFDEDVAKRYEAYGWEVLYVENGNEDLAGIAKAIAQAKLSKDKPTLIKMTTTIGYGSLHAGSHSVHGAPLKADDVKQLKSKFGFNPDKSFVVPQEVYDHYQKTILKPGVEANNKWNKLFSEYQKKFPELGAELARRLSGQLPANWESKLPTYTAKDSAVATRKLSETVLEDVYNQLPELIGGSADLTPSNLTRWKEALDFQPPSSGSGNYSGRYIRYGIREHAMGAIMNGISAFGANYKPYGGTFLNFVSYAAGAVRLSALSGHPVIWVATHDSIGVGEDGPTHQPIETLAHFRSLPNIQVWRPADGNEVSAAYKNSLESKHTPSIIALSRQNLPQLEGSSIESASKGGYVLQDVANPDIILVATGSEVSLSVEAAKTLAAKNIKARVVSLPDFFTFDKQPLEYRLSVLPDNVPIMSVEVLATTCWGKYAHQSFGIDRFGASGKAPEVFKFFGFTPEGVAERAQKTIAFYKGDKLISPLKKAF.

Residue H30 coordinates substrate. Residues H69 and 116-118 (GPL) contribute to the thiamine diphosphate site. D157 serves as a coordination point for Mg(2+). 2 residues coordinate thiamine diphosphate: G158 and N187. Residues N187 and I189 each coordinate Mg(2+). H263 contributes to the substrate binding site. H263 lines the thiamine diphosphate pocket. Residues S286 and S335 each carry the phosphoserine modification. Residues R359 and S386 each coordinate substrate. At S402 the chain carries Phosphoserine. Residues E418 and F445 each coordinate thiamine diphosphate. The active-site Proton donor is the E418. 2 residues coordinate substrate: H469 and D477. S492 is modified (phosphoserine). Position 528 (R528) interacts with substrate. Residue K647 forms a Glycyl lysine isopeptide (Lys-Gly) (interchain with G-Cter in ubiquitin) linkage.

It belongs to the transketolase family. Homodimer. Requires Mg(2+) as cofactor. It depends on Ca(2+) as a cofactor. Mn(2+) is required as a cofactor. Co(2+) serves as cofactor. The cofactor is thiamine diphosphate.

The catalysed reaction is D-sedoheptulose 7-phosphate + D-glyceraldehyde 3-phosphate = aldehydo-D-ribose 5-phosphate + D-xylulose 5-phosphate. Functionally, catalyzes the transfer of a two-carbon ketol group from a ketose donor to an aldose acceptor, via a covalent intermediate with the cofactor thiamine pyrophosphate. The protein is Transketolase 1 (TKL1) of Saccharomyces cerevisiae (strain ATCC 204508 / S288c) (Baker's yeast).